Reading from the N-terminus, the 328-residue chain is Phosphate acyltransferase (328 aa).

Belongs to the PlsX family. As to quaternary structure, homodimer. Probably interacts with PlsY.

The protein localises to the cytoplasm. The catalysed reaction is a fatty acyl-[ACP] + phosphate = an acyl phosphate + holo-[ACP]. Its pathway is lipid metabolism; phospholipid metabolism. In terms of biological role, catalyzes the reversible formation of acyl-phosphate (acyl-PO(4)) from acyl-[acyl-carrier-protein] (acyl-ACP). This enzyme utilizes acyl-ACP as fatty acyl donor, but not acyl-CoA. The protein is Phosphate acyltransferase of Geobacillus thermodenitrificans (strain NG80-2).